The following is a 371-amino-acid chain: tRNA N6-adenosine threonylcarbamoyltransferase (371 aa).

2 residues coordinate Fe cation: His110 and His114. Substrate contacts are provided by residues 132-136, Asp165, Gly178, Asp182, and Asn289; that span reads LVSGG. Fe cation is bound at residue Asp317.

The protein belongs to the KAE1 / TsaD family. Requires Fe(2+) as cofactor.

The protein localises to the cytoplasm. The enzyme catalyses L-threonylcarbamoyladenylate + adenosine(37) in tRNA = N(6)-L-threonylcarbamoyladenosine(37) in tRNA + AMP + H(+). In terms of biological role, required for the formation of a threonylcarbamoyl group on adenosine at position 37 (t(6)A37) in tRNAs that read codons beginning with adenine. Is involved in the transfer of the threonylcarbamoyl moiety of threonylcarbamoyl-AMP (TC-AMP) to the N6 group of A37, together with TsaE and TsaB. TsaD likely plays a direct catalytic role in this reaction. The polypeptide is tRNA N6-adenosine threonylcarbamoyltransferase (Solidesulfovibrio magneticus (strain ATCC 700980 / DSM 13731 / RS-1) (Desulfovibrio magneticus)).